The sequence spans 220 residues: Iron-sulfur cluster repair protein YtfE (220 aa).

This sequence belongs to the RIC family. YtfE subfamily. Homodimer.

Its subcellular location is the cytoplasm. Its function is as follows. Di-iron-containing protein involved in the repair of iron-sulfur clusters damaged by oxidative and nitrosative stress conditions. This is Iron-sulfur cluster repair protein YtfE from Salmonella choleraesuis (strain SC-B67).